The primary structure comprises 185 residues: MNWRSEHIWIELLKGSRKRGNFFWACILFLGSLGFLAVGASSYLGKNIISVLPSQQILFFPQGVVMSFYGIAGLFISAYLWCTILWNVGSGYDRFDRKEGVVCIFRWGFPGIKRRVFLRFLMRDIQSIRIQVKEGLFPRRILYMEIRGQGAIPLTRTDEKFFTPREIEQKAAELAYFLRIPMEVF.

2 helical membrane-spanning segments follow: residues 20–40 (GNFF…AVGA) and 57–77 (ILFF…LFIS).

It belongs to the Ycf4 family.

It is found in the plastid. Its subcellular location is the chloroplast thylakoid membrane. Seems to be required for the assembly of the photosystem I complex. This chain is Photosystem I assembly protein Ycf4, found in Oryza nivara (Indian wild rice).